Here is a 67-residue protein sequence, read N- to C-terminus: Large ribosomal subunit protein uL29 (67 aa).

The protein belongs to the universal ribosomal protein uL29 family.

This Wolbachia pipientis wMel protein is Large ribosomal subunit protein uL29.